The following is a 438-amino-acid chain: 3-phosphoshikimate 1-carboxyvinyltransferase (438 aa).

Positions 25, 26, and 30 each coordinate 3-phosphoshikimate. Residue K25 participates in phosphoenolpyruvate binding. Phosphoenolpyruvate is bound by residues G99 and R128. The 3-phosphoshikimate site is built by S173, Q175, D325, and K352. Position 175 (Q175) interacts with phosphoenolpyruvate. The active-site Proton acceptor is D325. R356 and R398 together coordinate phosphoenolpyruvate.

Belongs to the EPSP synthase family. Monomer.

The protein resides in the cytoplasm. It catalyses the reaction 3-phosphoshikimate + phosphoenolpyruvate = 5-O-(1-carboxyvinyl)-3-phosphoshikimate + phosphate. The protein operates within metabolic intermediate biosynthesis; chorismate biosynthesis; chorismate from D-erythrose 4-phosphate and phosphoenolpyruvate: step 6/7. Catalyzes the transfer of the enolpyruvyl moiety of phosphoenolpyruvate (PEP) to the 5-hydroxyl of shikimate-3-phosphate (S3P) to produce enolpyruvyl shikimate-3-phosphate and inorganic phosphate. This Prochlorococcus marinus subsp. pastoris (strain CCMP1986 / NIES-2087 / MED4) protein is 3-phosphoshikimate 1-carboxyvinyltransferase.